The chain runs to 684 residues: Acetophenone carboxylase delta subunit (684 aa).

It belongs to the oxoprolinase family. Acetophenone carboxylase consists of five subunits; a heterooctameric subcomplex of two alpha (Apc1), two beta (Apc2), two gamma (Apc3) and two delta (Apc4) subunits assembles with the epsilon (Apc5) subunit in an unknown stoichiometry. Mg(2+) serves as cofactor. Requires Mn(2+) as cofactor.

The protein resides in the cytoplasm. It carries out the reaction acetophenone + hydrogencarbonate + 2 ATP + H2O = 3-oxo-3-phenylpropanoate + 2 ADP + 2 phosphate + 2 H(+). With respect to regulation, inhibited by zinc ions, carbamoylphosphate and beta,gamma-imido-ATP. Functionally, catalyzes the carboxylation of acetophenone to form 3-oxo-3-phenylpropanoate (benzoylacetate) in the anaerobic catabolism of ethylbenzene. Also carboxylates propiophenone at the same rate and 4-acetyl-pyridine at lower rates. This is Acetophenone carboxylase delta subunit (apc4) from Aromatoleum aromaticum (strain DSM 19018 / LMG 30748 / EbN1) (Azoarcus sp. (strain EbN1)).